We begin with the raw amino-acid sequence, 278 residues long: Large ribosomal subunit protein uL2 (278 aa).

The disordered stretch occupies residues 222–278; that stretch reads GVVMNPIDHPHGGGEGRTSGGRHPVTPWGKPTKGKKTRSNKSTNKFILISRHKRKKK.

Belongs to the universal ribosomal protein uL2 family. Part of the 50S ribosomal subunit. Forms a bridge to the 30S subunit in the 70S ribosome.

Functionally, one of the primary rRNA binding proteins. Required for association of the 30S and 50S subunits to form the 70S ribosome, for tRNA binding and peptide bond formation. It has been suggested to have peptidyltransferase activity; this is somewhat controversial. Makes several contacts with the 16S rRNA in the 70S ribosome. The protein is Large ribosomal subunit protein uL2 of Afipia carboxidovorans (strain ATCC 49405 / DSM 1227 / KCTC 32145 / OM5) (Oligotropha carboxidovorans).